Reading from the N-terminus, the 366-residue chain is NADH-quinone oxidoreductase subunit D (366 aa).

It belongs to the complex I 49 kDa subunit family. In terms of assembly, NDH-1 is composed of 14 different subunits. Subunits NuoB, C, D, E, F, and G constitute the peripheral sector of the complex.

The protein resides in the cell membrane. It catalyses the reaction a quinone + NADH + 5 H(+)(in) = a quinol + NAD(+) + 4 H(+)(out). NDH-1 shuttles electrons from NADH, via FMN and iron-sulfur (Fe-S) centers, to quinones in the respiratory chain. The immediate electron acceptor for the enzyme in this species is believed to be a menaquinone. Couples the redox reaction to proton translocation (for every two electrons transferred, four hydrogen ions are translocated across the cytoplasmic membrane), and thus conserves the redox energy in a proton gradient. The protein is NADH-quinone oxidoreductase subunit D of Bacillus cytotoxicus (strain DSM 22905 / CIP 110041 / 391-98 / NVH 391-98).